Reading from the N-terminus, the 188-residue chain is Protein Cripto (188 aa).

Residues 1 to 30 (MDCRKMARFSYSVIWIMAISKVFELGLVAG) form the signal peptide. The 30-residue stretch at 78–107 (LNRTCCLNGGTCMLGSFCACPPSFYGRNCE) folds into the EGF-like domain. N-linked (GlcNAc...) asparagine glycosylation is present at Asn-79. 6 disulfide bridges follow: Cys-82–Cys-89, Cys-83–Cys-95, Cys-97–Cys-106, Cys-115–Cys-133, Cys-128–Cys-149, and Cys-131–Cys-140. Asp-150 carries GPI-anchor amidated aspartate lipidation. A propeptide spans 151–188 (GLVMDEHLVASRTPELPPSARTTTFMLVGICLSIQSYY) (removed in mature form).

It belongs to the EGF-CFC (Cripto-1/FRL1/Cryptic) family. As to quaternary structure, interacts with the activin type-1 receptor ACVR1B. In terms of processing, the GPI-anchor is attached to the protein in the endoplasmic reticulum and serves to target the protein to the cell surface. There, it is processed by GPI processing phospholipase A2 (TMEM8A), removing an acyl-chain at the sn-2 position of GPI and releasing CRIPTO as a lysophosphatidylinositol-bearing form, which is further cleaved by phospholipase D (GPLD1) into a soluble form. As to expression, preferentially expressed in gastric and colorectal carcinomas than in their normal counterparts. Expressed in breast and lung.

The protein localises to the cell membrane. It localises to the secreted. GPI-anchored cell membrane protein involved in Nodal signaling. Cell-associated CRIPTO acts as a Nodal coreceptor in cis. Shedding of CRIPTO by TMEM8A modulates Nodal signaling by allowing soluble CRIPTO to act as a Nodal coreceptor on other cells. Could play a role in the determination of the epiblastic cells that subsequently give rise to the mesoderm. The polypeptide is Protein Cripto (Homo sapiens (Human)).